Reading from the N-terminus, the 331-residue chain is Adenosine deaminase (331 aa).

Zn(2+) is bound by residues H12 and H14. 3 residues coordinate substrate: H14, D16, and G170. H197 contacts Zn(2+). E200 serves as the catalytic Proton donor. D278 is a binding site for Zn(2+). D279 serves as a coordination point for substrate.

The protein belongs to the metallo-dependent hydrolases superfamily. Adenosine and AMP deaminases family. Adenosine deaminase subfamily. The cofactor is Zn(2+).

The enzyme catalyses adenosine + H2O + H(+) = inosine + NH4(+). The catalysed reaction is 2'-deoxyadenosine + H2O + H(+) = 2'-deoxyinosine + NH4(+). In terms of biological role, catalyzes the hydrolytic deamination of adenosine and 2-deoxyadenosine. This chain is Adenosine deaminase, found in Shewanella oneidensis (strain ATCC 700550 / JCM 31522 / CIP 106686 / LMG 19005 / NCIMB 14063 / MR-1).